The primary structure comprises 67 residues: Large ribosomal subunit protein uL30 (67 aa).

Belongs to the universal ribosomal protein uL30 family. In terms of assembly, part of the 50S ribosomal subunit.

The sequence is that of Large ribosomal subunit protein uL30 from Thermotoga maritima (strain ATCC 43589 / DSM 3109 / JCM 10099 / NBRC 100826 / MSB8).